A 1538-amino-acid polypeptide reads, in one-letter code: Phenolphthiocerol/phthiocerol polyketide synthase subunit B (1538 aa).

The Ketosynthase family 3 (KS3) domain maps to 33-455 (AEPVAVVGIG…GTNAHVIIEQ (423 aa)). Residues Cys-205, His-340, and His-377 each act as for beta-ketoacyl synthase activity in the active site. The segment at 553–882 (DGSPGPGTVF…TNLYTADIAH (330 aa)) is acyltransferase. The active-site For malonyltransferase activity is Ser-649. 1153–1196 (SQLVIGATGNIGPHLIRQLARMGAKTIVAMARKPGALDELTQCL) provides a ligand contact to NADP(+). The interval 1153–1328 (SQLVIGATGN…TVVDWGLWKS (176 aa)) is beta-ketoacyl reductase. Positions 1423–1498 (DMLFDHVGAL…SLTDYLATVL (76 aa)) constitute a Carrier domain. Ser-1458 carries the post-translational modification O-(pantetheine 4'-phosphoryl)serine.

Requires NADP(+) as cofactor. Pantetheine 4'-phosphate is required as a cofactor.

It catalyses the reaction icosanoyl-[(phenol)carboxyphthiodiolenone synthase] + 2 (S)-methylmalonyl-CoA + 3 malonyl-CoA + 5 NADPH + 10 H(+) = C32-carboxyphthiodiolenone-[(phenol)carboxyphthiodiolenone synthase] + 5 CO2 + 5 NADP(+) + 5 CoA + 2 H2O. The catalysed reaction is docosanoyl-[(phenol)carboxyphthiodiolenone synthase] + 2 (S)-methylmalonyl-CoA + 3 malonyl-CoA + 5 NADPH + 10 H(+) = C34-carboxyphthiodiolenone-[(phenol)carboxyphthiodiolenone synthase] + 5 CO2 + 5 NADP(+) + 5 CoA + 2 H2O. The enzyme catalyses 17-(4-hydroxyphenyl)heptadecanoyl-[(phenol)carboxyphthiodiolenone synthase] + 2 (S)-methylmalonyl-CoA + 3 malonyl-CoA + 5 NADPH + 10 H(+) = C35-(phenol)carboxyphthiodiolenone-[(phenol)carboxyphthiodiolenone synthase] + 5 CO2 + 5 NADP(+) + 5 CoA + 2 H2O. It carries out the reaction 19-(4-hydroxyphenyl)nonadecanoyl-[(phenol)carboxyphthiodiolenone synthase] + 2 (S)-methylmalonyl-CoA + 3 malonyl-CoA + 5 NADPH + 10 H(+) = C37-(phenol)carboxyphthiodiolenone-[(phenol)carboxyphthiodiolenone synthase] + 5 CO2 + 5 NADP(+) + 5 CoA + 2 H2O. Its pathway is lipid metabolism; fatty acid biosynthesis. Functionally, part of the PpsABCDE complex involved in the biosynthesis of the lipid core common to phthiocerols and phenolphthiocerols by successive additions of malonyl-CoA or methylmalonyl-CoA extender units. PpsA can accept as substrate the activated forms of either icosanoyl (C20), docosanoyl (C22) or lignoceroyl (C24) groups from FadD26, or a (4-hydroxyphenyl)-C17 or (4-hydroxyphenyl)-C19 fatty acyl from FadD29. PpsA initiates the biosynthesis and extends its substrate using a malonyl-CoA extender unit. The PpsB and PpsC proteins add the second and third malonyl-CoA extender units. PpsD adds an (R)-methylmalonyl unit and PpsE adds a second (R)-methylmalonyl unit. The incorporation of the methylmalonyl units results in formation of two branched methyl groups in the elongated product. This chain is Phenolphthiocerol/phthiocerol polyketide synthase subunit B (ppsB), found in Mycobacterium bovis (strain ATCC BAA-935 / AF2122/97).